The following is a 368-amino-acid chain: tRNA(Met) cytidine acetate ligase (368 aa).

Residues 7–20 (IAEF…HKYL), Gly-96, Asn-152, and Arg-175 each bind ATP.

This sequence belongs to the TmcAL family.

The protein resides in the cytoplasm. It catalyses the reaction cytidine(34) in elongator tRNA(Met) + acetate + ATP = N(4)-acetylcytidine(34) in elongator tRNA(Met) + AMP + diphosphate. Functionally, catalyzes the formation of N(4)-acetylcytidine (ac(4)C) at the wobble position of elongator tRNA(Met), using acetate and ATP as substrates. First activates an acetate ion to form acetyladenylate (Ac-AMP) and then transfers the acetyl group to tRNA to form ac(4)C34. The polypeptide is tRNA(Met) cytidine acetate ligase (Streptococcus pyogenes serotype M1).